Here is a 466-residue protein sequence, read N- to C-terminus: Ribulose bisphosphate carboxylase large chain (466 aa).

N6,N6,N6-trimethyllysine is present on Lys5. Positions 114 and 164 each coordinate substrate. The Proton acceptor role is filled by Lys166. Lys168 contributes to the substrate binding site. Residues Lys192, Asp194, and Glu195 each coordinate Mg(2+). Lys192 carries the post-translational modification N6-carboxylysine. His285 (proton acceptor) is an active-site residue. Arg286, His318, and Ser370 together coordinate substrate.

It belongs to the RuBisCO large chain family. Type I subfamily. Heterohexadecamer of 8 large chains and 8 small chains; disulfide-linked. The disulfide link is formed within the large subunit homodimers. The cofactor is Mg(2+). The disulfide bond which can form in the large chain dimeric partners within the hexadecamer appears to be associated with oxidative stress and protein turnover.

The protein localises to the plastid. It is found in the chloroplast. The catalysed reaction is 2 (2R)-3-phosphoglycerate + 2 H(+) = D-ribulose 1,5-bisphosphate + CO2 + H2O. It carries out the reaction D-ribulose 1,5-bisphosphate + O2 = 2-phosphoglycolate + (2R)-3-phosphoglycerate + 2 H(+). Functionally, ruBisCO catalyzes two reactions: the carboxylation of D-ribulose 1,5-bisphosphate, the primary event in carbon dioxide fixation, as well as the oxidative fragmentation of the pentose substrate in the photorespiration process. Both reactions occur simultaneously and in competition at the same active site. This Drosera binata (Fork-leaved sundew) protein is Ribulose bisphosphate carboxylase large chain.